The primary structure comprises 436 residues: Glutamate-1-semialdehyde 2,1-aminomutase (436 aa).

Position 269 is an N6-(pyridoxal phosphate)lysine (lysine 269).

Belongs to the class-III pyridoxal-phosphate-dependent aminotransferase family. HemL subfamily. In terms of assembly, homodimer. Requires pyridoxal 5'-phosphate as cofactor.

Its subcellular location is the cytoplasm. The catalysed reaction is (S)-4-amino-5-oxopentanoate = 5-aminolevulinate. The protein operates within porphyrin-containing compound metabolism; protoporphyrin-IX biosynthesis; 5-aminolevulinate from L-glutamyl-tRNA(Glu): step 2/2. Its pathway is porphyrin-containing compound metabolism; chlorophyll biosynthesis. The sequence is that of Glutamate-1-semialdehyde 2,1-aminomutase from Heliobacterium modesticaldum (strain ATCC 51547 / Ice1).